The chain runs to 418 residues: Protein fuzzy homolog (418 aa).

It belongs to the fuzzy family. As to quaternary structure, interacts with rsg1. Interacts with intu and wdpcp; fuz, intu and wdpcp probably form the core CPLANE (ciliogenesis and planar polarity effectors) complex.

The protein localises to the cytoplasm. Its subcellular location is the cytoskeleton. It localises to the cilium basal body. Its function is as follows. Probable planar cell polarity effector involved in cilium biogenesis. Proposed to function as core component of the CPLANE (ciliogenesis and planar polarity effectors) complex involved in the recruitment of peripheral IFT-A proteins to basal bodies. May regulate protein and membrane transport to the cilium. May control the organization of the apical actin cytoskeleton, which is essential for the normal orientation of elongating ciliary microtubules. The protein is Protein fuzzy homolog (fuz) of Xenopus tropicalis (Western clawed frog).